The following is a 394-amino-acid chain: MSKETFQRNKPHINIGTIGHVDHGKTTLTAAITRTLSGDGLADFRDYSSIDNTPEEKARGITINASHVEYETANRHYAHVDCPGHADYVKNMITGAAQMDGAILVVSATDGAMPQTKEHILLARQVGVPYIVVFLNKIDMISEEDAELVDLVEMELAELLEEKGYKGCPIIRGSALKALEGDAAYIEKVRELMQAVDDNIPTPEREIDKPFLMPIEDVFSISGRGTVVTGRIERGIVKVSDKVQLVGLRDTKETIVTGVEMFRKELPEGRAGENVGLLLRGIGKNDVERGMVVCLPNSVKPHTRFKCAVYVLQKEEGGRHKPFFTGYRPQFFFRTTDVTGVVTLPEGVEMVMPGDNVEFEVQLISPVALEEGMRFAIREGGRTIGAGTISKIIA.

The 195-residue stretch at 10 to 204 (KPHINIGTIG…AVDDNIPTPE (195 aa)) folds into the tr-type G domain. Positions 19–26 (GHVDHGKT) are G1. 19 to 26 (GHVDHGKT) lines the GTP pocket. T26 serves as a coordination point for Mg(2+). Residues 60–64 (GITIN) form a G2 region. Residues 81-84 (DCPG) form a G3 region. GTP contacts are provided by residues 81–85 (DCPGH) and 136–139 (NKID). The segment at 136 to 139 (NKID) is G4. Positions 174-176 (SAL) are G5.

Belongs to the TRAFAC class translation factor GTPase superfamily. Classic translation factor GTPase family. EF-Tu/EF-1A subfamily. In terms of assembly, monomer.

It is found in the cytoplasm. It catalyses the reaction GTP + H2O = GDP + phosphate + H(+). In terms of biological role, GTP hydrolase that promotes the GTP-dependent binding of aminoacyl-tRNA to the A-site of ribosomes during protein biosynthesis. This chain is Elongation factor Tu, found in Chlamydia trachomatis serovar L2 (strain ATCC VR-902B / DSM 19102 / 434/Bu).